Reading from the N-terminus, the 290-residue chain is Pyridoxal 5'-phosphate synthase subunit PdxS (290 aa).

Residue aspartate 22 coordinates D-ribose 5-phosphate. Lysine 79 functions as the Schiff-base intermediate with D-ribose 5-phosphate in the catalytic mechanism. Glycine 151 contacts D-ribose 5-phosphate. Arginine 163 lines the D-glyceraldehyde 3-phosphate pocket. Residues glycine 212 and 233 to 234 (GS) each bind D-ribose 5-phosphate.

It belongs to the PdxS/SNZ family. In terms of assembly, in the presence of PdxT, forms a dodecamer of heterodimers.

The catalysed reaction is aldehydo-D-ribose 5-phosphate + D-glyceraldehyde 3-phosphate + L-glutamine = pyridoxal 5'-phosphate + L-glutamate + phosphate + 3 H2O + H(+). It participates in cofactor biosynthesis; pyridoxal 5'-phosphate biosynthesis. Functionally, catalyzes the formation of pyridoxal 5'-phosphate from ribose 5-phosphate (RBP), glyceraldehyde 3-phosphate (G3P) and ammonia. The ammonia is provided by the PdxT subunit. Can also use ribulose 5-phosphate and dihydroxyacetone phosphate as substrates, resulting from enzyme-catalyzed isomerization of RBP and G3P, respectively. This chain is Pyridoxal 5'-phosphate synthase subunit PdxS, found in Clostridium botulinum (strain Loch Maree / Type A3).